The primary structure comprises 364 residues: Mannose-1-phosphate guanyltransferase (364 aa).

This sequence belongs to the transferase hexapeptide repeat family.

Its subcellular location is the cytoplasm. The catalysed reaction is alpha-D-mannose 1-phosphate + GTP + H(+) = GDP-alpha-D-mannose + diphosphate. The protein operates within nucleotide-sugar biosynthesis; GDP-alpha-D-mannose biosynthesis; GDP-alpha-D-mannose from alpha-D-mannose 1-phosphate (GTP route): step 1/1. Functionally, involved in cell wall synthesis where it is required for glycosylation. Involved in cell cycle progression through cell-size checkpoint. The polypeptide is Mannose-1-phosphate guanyltransferase (MPG1) (Gibberella zeae (strain ATCC MYA-4620 / CBS 123657 / FGSC 9075 / NRRL 31084 / PH-1) (Wheat head blight fungus)).